A 457-amino-acid polypeptide reads, in one-letter code: uncharacterized protein (457 aa).

Residues 5 to 63 (PVEEGQKFPLTIRRMGINGEGIGYFKKAVVFVPGAITGEEVVVEAVKVRDRFTEAKLNK) enclose the TRAM domain. Positions 76, 82, 85, and 166 each coordinate [4Fe-4S] cluster. Residues Gln290, Tyr319, Asp340, and Asp388 each coordinate S-adenosyl-L-methionine. Catalysis depends on Cys415, which acts as the Nucleophile.

The protein belongs to the class I-like SAM-binding methyltransferase superfamily. RNA M5U methyltransferase family.

This is an uncharacterized protein from Listeria innocua serovar 6a (strain ATCC BAA-680 / CLIP 11262).